A 270-amino-acid polypeptide reads, in one-letter code: Putative pyruvate, phosphate dikinase regulatory protein (270 aa).

151 to 158 contributes to the ADP binding site; that stretch reads GVSRTSKT.

The protein belongs to the pyruvate, phosphate/water dikinase regulatory protein family. PDRP subfamily.

It catalyses the reaction N(tele)-phospho-L-histidyl/L-threonyl-[pyruvate, phosphate dikinase] + ADP = N(tele)-phospho-L-histidyl/O-phospho-L-threonyl-[pyruvate, phosphate dikinase] + AMP + H(+). The enzyme catalyses N(tele)-phospho-L-histidyl/O-phospho-L-threonyl-[pyruvate, phosphate dikinase] + phosphate + H(+) = N(tele)-phospho-L-histidyl/L-threonyl-[pyruvate, phosphate dikinase] + diphosphate. Its function is as follows. Bifunctional serine/threonine kinase and phosphorylase involved in the regulation of the pyruvate, phosphate dikinase (PPDK) by catalyzing its phosphorylation/dephosphorylation. This chain is Putative pyruvate, phosphate dikinase regulatory protein, found in Streptococcus gordonii (strain Challis / ATCC 35105 / BCRC 15272 / CH1 / DL1 / V288).